A 305-amino-acid polypeptide reads, in one-letter code: Protoheme IX farnesyltransferase 1 (305 aa).

Helical transmembrane passes span 30-50 (IGIVNSNLVTTFTGMWLAFQF), 59-79 (LDVILFTMLGAALIIGGSGAM), 108-128 (FVLTIALSFLIVGEILLFAAS), 129-149 (FAAGMWGLAGIFAYVVLYSMW), 154-176 (HVSNTVVGSISGAIPPIIGFAAV), 180-202 (LGPGALALFLIMFAWQPPHFYAL), 232-252 (LFWILLLLPLPFLLPELGIGF), 253-273 (LTLATALNLGWLILALKGFTA), and 284-304 (FIYSLNHMTILFVSIIIFAVF).

It belongs to the UbiA prenyltransferase family. Protoheme IX farnesyltransferase subfamily. Interacts with CtaA.

It is found in the cell membrane. It carries out the reaction heme b + (2E,6E)-farnesyl diphosphate + H2O = Fe(II)-heme o + diphosphate. It participates in porphyrin-containing compound metabolism; heme O biosynthesis; heme O from protoheme: step 1/1. Functionally, converts heme B (protoheme IX) to heme O by substitution of the vinyl group on carbon 2 of heme B porphyrin ring with a hydroxyethyl farnesyl side group. The protein is Protoheme IX farnesyltransferase 1 of Lysinibacillus sphaericus (strain C3-41).